Here is a 380-residue protein sequence, read N- to C-terminus: Cytochrome b (380 aa).

4 helical membrane-spanning segments follow: residues 33–53 (FGSLLGACLILQITTGLFLAM), 77–98 (WTIRYLHANGASMFFICLFLHI), 113–133 (WNIGIILLLTTMAAAFMGYVL), and 178–198 (FFTFHFILPFIITALTTLHLL). Heme b contacts are provided by histidine 83 and histidine 97. Heme b-binding residues include histidine 182 and histidine 196. Histidine 201 provides a ligand contact to a ubiquinone. Transmembrane regions (helical) follow at residues 226–246 (IKDILGLFLFLLTLMTLTLFS), 288–308 (LGGVLALLLSILILAMIPILH), 320–340 (LSQLLYWFLIADLFTLTWIGG), and 347–367 (FITIGQVASVLYFTTILFLMP).

This sequence belongs to the cytochrome b family. The cytochrome bc1 complex contains 11 subunits: 3 respiratory subunits (MT-CYB, CYC1 and UQCRFS1), 2 core proteins (UQCRC1 and UQCRC2) and 6 low-molecular weight proteins (UQCRH/QCR6, UQCRB/QCR7, UQCRQ/QCR8, UQCR10/QCR9, UQCR11/QCR10 and a cleavage product of UQCRFS1). This cytochrome bc1 complex then forms a dimer. Requires heme b as cofactor.

The protein localises to the mitochondrion inner membrane. Component of the ubiquinol-cytochrome c reductase complex (complex III or cytochrome b-c1 complex) that is part of the mitochondrial respiratory chain. The b-c1 complex mediates electron transfer from ubiquinol to cytochrome c. Contributes to the generation of a proton gradient across the mitochondrial membrane that is then used for ATP synthesis. The protein is Cytochrome b (MT-CYB) of Gorilla gorilla gorilla (Western lowland gorilla).